A 182-amino-acid polypeptide reads, in one-letter code: Large ribosomal subunit protein uL6 (182 aa).

Belongs to the universal ribosomal protein uL6 family. In terms of assembly, part of the 50S ribosomal subunit.

In terms of biological role, this protein binds to the 23S rRNA, and is important in its secondary structure. It is located near the subunit interface in the base of the L7/L12 stalk, and near the tRNA binding site of the peptidyltransferase center. This is Large ribosomal subunit protein uL6 from Karelsulcia muelleri (strain GWSS) (Sulcia muelleri).